We begin with the raw amino-acid sequence, 97 residues long: Aspartyl/glutamyl-tRNA(Asn/Gln) amidotransferase subunit C (97 aa).

It belongs to the GatC family. Heterotrimer of A, B and C subunits.

The catalysed reaction is L-glutamyl-tRNA(Gln) + L-glutamine + ATP + H2O = L-glutaminyl-tRNA(Gln) + L-glutamate + ADP + phosphate + H(+). The enzyme catalyses L-aspartyl-tRNA(Asn) + L-glutamine + ATP + H2O = L-asparaginyl-tRNA(Asn) + L-glutamate + ADP + phosphate + 2 H(+). Allows the formation of correctly charged Asn-tRNA(Asn) or Gln-tRNA(Gln) through the transamidation of misacylated Asp-tRNA(Asn) or Glu-tRNA(Gln) in organisms which lack either or both of asparaginyl-tRNA or glutaminyl-tRNA synthetases. The reaction takes place in the presence of glutamine and ATP through an activated phospho-Asp-tRNA(Asn) or phospho-Glu-tRNA(Gln). This is Aspartyl/glutamyl-tRNA(Asn/Gln) amidotransferase subunit C from Parasynechococcus marenigrum (strain WH8102).